The primary structure comprises 355 residues: MLIDKLKPIVARYDEISSLLSSESVLSNIKQLTELSKEQSDIESIAQNAKTYFSILENIVQNKALLEDKELGELAKEELKDLESAKATLEEEIKLLLIPKDPNDNKNIYLEIRAGTGGDEAGIFVGDLFKAYCRYADLQKWKVEIISSNENNVGGYKEVIALVKGNGAYSKLKFEGGTHRVQRVPETESQGRIHTSAITVAIMPEVDDVEININPNDLKIDVFRSGGHGGQSVNTTDSAVRITHIPTGISVSMQDEKSQHKNKDKALKILKARLYEAELEAQNAQNKEARKTQVGSGDRSERIRTYNYPQNRLTDHRIGLTLYSLEEIMLGGLLDEFINPLIAHAQSQAMGNIEQ.

Residue Gln231 is modified to N5-methylglutamine. The interval 283–303 (NAQNKEARKTQVGSGDRSERI) is disordered.

It belongs to the prokaryotic/mitochondrial release factor family. Methylated by PrmC. Methylation increases the termination efficiency of RF1.

It is found in the cytoplasm. Its function is as follows. Peptide chain release factor 1 directs the termination of translation in response to the peptide chain termination codons UAG and UAA. In Helicobacter hepaticus (strain ATCC 51449 / 3B1), this protein is Peptide chain release factor 1.